A 147-amino-acid chain; its full sequence is Arginine repressor (147 aa).

Belongs to the ArgR family.

The protein resides in the cytoplasm. The protein operates within amino-acid biosynthesis; L-arginine biosynthesis [regulation]. In terms of biological role, regulates arginine biosynthesis genes. In Chlamydia felis (strain Fe/C-56) (Chlamydophila felis), this protein is Arginine repressor.